Consider the following 187-residue polypeptide: MILVDWQIEDRIRRGHIRVDPFEPGLIQPNSLDIRLGSHFVWYVPGETVIDPYDSETVCRDTEEMVADSIVLAPGRFLLAETLEAIELPDDIVASIEGKSSIARLGVELHQTGGWIDAGFRGTITLEMCNVNSRPVKVYAGMPIGQLVFYRTDRAARPYNMKQDAKYMDQQQATLSRYHENARRAEE.

Residues K99–R104, D117, T125–E127, Q146, Y159, K166, and Q170 contribute to the dCTP site. The Proton donor/acceptor role is filled by E127.

The protein belongs to the dCTP deaminase family. In terms of assembly, homotrimer.

It catalyses the reaction dCTP + 2 H2O = dUMP + NH4(+) + diphosphate. Its pathway is pyrimidine metabolism; dUMP biosynthesis; dUMP from dCTP: step 1/1. Its function is as follows. Bifunctional enzyme that catalyzes both the deamination of dCTP to dUTP and the hydrolysis of dUTP to dUMP without releasing the toxic dUTP intermediate. In Methanoculleus marisnigri (strain ATCC 35101 / DSM 1498 / JR1), this protein is dCTP deaminase, dUMP-forming.